A 150-amino-acid chain; its full sequence is DNA-directed RNA polymerases I, II, and III subunit RPABC3 (150 aa).

Position 2 is an N-acetylalanine (Ala2).

This sequence belongs to the eukaryotic RPB8 RNA polymerase subunit family. Component of the RNA polymerase I (Pol I), RNA polymerase II (Pol II) and RNA polymerase III (Pol III) complexes consisting of at least 13, 12 and 17 subunits, respectively. Pol I complex consists of a ten-subunit catalytic core composed of POLR1A/RPA1, POLR1B/RPA2, POLR1C/RPAC1, POLR1D/RPAC2, POLR1H/RPA12, POLR2E/RPABC1, POLR2F/RPABC2, POLR2H/RPABC3, POLR2K/RPABC4 and POLR2L/RPABC5; a mobile stalk subunit POLR1F/RPA43 protruding from the core and additional subunits homologous to general transcription factors POLR1E/RPA49 and POLR1G/RPA34. Part of Pol I pre-initiation complex (PIC), in which Pol I core assembles with RRN3 and promoter-bound UTBF and SL1/TIF-IB complex. Pol II complex contains a ten-subunit catalytic core composed of POLR2A/RPB1, POLR2B/RPB2, POLR2C/RPB3, POLR2I/RPB9, POLR2J/RPB11, POLR2E/RPABC1, POLR2F/RPABC2, POLR2H/RPABC3, POLR2K/RPABC4 and POLR2L/RPABC5 and a mobile stalk composed of two subunits POLR2D/RPB4 and POLR2G/RPB7. Part of Pol II(G) complex, in which Pol II core associates with an additional subunit POLR2M; unlike conventional Pol II, Pol II(G) functions as a transcriptional repressor. Part of Pol II pre-initiation complex (PIC), in which Pol II core assembles with Mediator, general transcription factors and other specific initiation factors including GTF2E1, GTF2E2, GTF2F1, GTF2F2, TCEA1, ERCC2, ERCC3, GTF2H2, GTF2H3, GTF2H4, GTF2H5, GTF2A1, GTF2A2, GTF2B and TBP; this large multi-subunit PIC complex mediates DNA unwinding and targets Pol II core to the transcription start site where the first phosphodiester bond forms. Directly interacts with POLR2A. Pol III complex consists of a ten-subunit catalytic core composed of POLR3A/RPC1, POLR3B/RPC2, POLR1C/RPAC1, POLR1D/RPAC2, POLR3K/RPC10, POLR2E/RPABC1, POLR2F/RPABC2, POLR2H/RPABC3, POLR2K/RPABC4 and POLR2L/RPABC5; a mobile stalk composed of two subunits POLR3H/RPC8 and CRCP/RPC9, protruding from the core and functioning primarily in transcription initiation; and additional subunits homologous to general transcription factors of the RNA polymerase II machinery, POLR3C/RPC3-POLR3F/RPC6-POLR3G/RPC7 heterotrimer required for transcription initiation and POLR3D/RPC4-POLR3E/RPC5 heterodimer involved in both transcription initiation and termination.

The protein localises to the nucleus. The protein resides in the nucleolus. DNA-dependent RNA polymerase catalyzes the transcription of DNA into RNA using the four ribonucleoside triphosphates as substrates. Common component of RNA polymerases I, II and III which synthesize ribosomal RNA precursors, mRNA precursors and many functional non-coding RNAs, and small RNAs, such as 5S rRNA and tRNAs, respectively. This chain is DNA-directed RNA polymerases I, II, and III subunit RPABC3 (POLR2H), found in Bos taurus (Bovine).